Consider the following 84-residue polypeptide: NADH-ubiquinone oxidoreductase chain 4L (84 aa).

Transmembrane regions (helical) follow at residues 19-39 and 50-70; these read ITLLIAIEILLLTVTLKLIHI and IFSLIIIILAGAESAIGLSIL.

The protein belongs to the complex I subunit 4L family.

The protein localises to the mitochondrion membrane. It catalyses the reaction a ubiquinone + NADH + 5 H(+)(in) = a ubiquinol + NAD(+) + 4 H(+)(out). Its function is as follows. Core subunit of the mitochondrial membrane respiratory chain NADH dehydrogenase (Complex I) that is believed to belong to the minimal assembly required for catalysis. Complex I functions in the transfer of electrons from NADH to the respiratory chain. The immediate electron acceptor for the enzyme is believed to be ubiquinone. The sequence is that of NADH-ubiquinone oxidoreductase chain 4L (NAD4L) from Candida albicans (strain SC5314 / ATCC MYA-2876) (Yeast).